The sequence spans 186 residues: Pyridoxal 5'-phosphate synthase subunit PdxT (186 aa).

L-glutamine is bound at residue Gly-46 to Ser-48. Cys-75 acts as the Nucleophile in catalysis. Residues Arg-101 and Ile-129 to Arg-130 each bind L-glutamine. Residues His-165 and Glu-167 each act as charge relay system in the active site.

This sequence belongs to the glutaminase PdxT/SNO family. In terms of assembly, in the presence of PdxS, forms a dodecamer of heterodimers. Only shows activity in the heterodimer.

The catalysed reaction is aldehydo-D-ribose 5-phosphate + D-glyceraldehyde 3-phosphate + L-glutamine = pyridoxal 5'-phosphate + L-glutamate + phosphate + 3 H2O + H(+). It catalyses the reaction L-glutamine + H2O = L-glutamate + NH4(+). Its pathway is cofactor biosynthesis; pyridoxal 5'-phosphate biosynthesis. In terms of biological role, catalyzes the hydrolysis of glutamine to glutamate and ammonia as part of the biosynthesis of pyridoxal 5'-phosphate. The resulting ammonia molecule is channeled to the active site of PdxS. This is Pyridoxal 5'-phosphate synthase subunit PdxT from Staphylococcus aureus (strain Mu3 / ATCC 700698).